A 162-amino-acid chain; its full sequence is Regulator of sigma D (162 aa).

Belongs to the Rsd/AlgQ family. As to quaternary structure, interacts with RpoD.

The protein localises to the cytoplasm. Binds RpoD and negatively regulates RpoD-mediated transcription activation by preventing the interaction between the primary sigma factor RpoD with the catalytic core of the RNA polymerase and with promoter DNA. May be involved in replacement of the RNA polymerase sigma subunit from RpoD to RpoS during the transition from exponential growth to the stationary phase. This chain is Regulator of sigma D, found in Salmonella typhi.